The following is an 82-amino-acid chain: Small ribosomal subunit protein bS18 (82 aa).

The segment at 1-20 (MVDINQIPTRRPFHRRHKTC) is disordered.

The protein belongs to the bacterial ribosomal protein bS18 family. In terms of assembly, part of the 30S ribosomal subunit. Forms a tight heterodimer with protein bS6.

In terms of biological role, binds as a heterodimer with protein bS6 to the central domain of the 16S rRNA, where it helps stabilize the platform of the 30S subunit. This chain is Small ribosomal subunit protein bS18, found in Brucella suis (strain ATCC 23445 / NCTC 10510).